A 332-amino-acid chain; its full sequence is Biotin synthase (332 aa).

The Radical SAM core domain occupies 53 to 282 (HFGKKVKLNM…TKEIRISGGR (230 aa)). [4Fe-4S] cluster-binding residues include cysteine 71, cysteine 75, and cysteine 78. Positions 115, 147, 207, and 277 each coordinate [2Fe-2S] cluster.

This sequence belongs to the radical SAM superfamily. Biotin synthase family. In terms of assembly, homodimer. Requires [4Fe-4S] cluster as cofactor. [2Fe-2S] cluster serves as cofactor.

The enzyme catalyses (4R,5S)-dethiobiotin + (sulfur carrier)-SH + 2 reduced [2Fe-2S]-[ferredoxin] + 2 S-adenosyl-L-methionine = (sulfur carrier)-H + biotin + 2 5'-deoxyadenosine + 2 L-methionine + 2 oxidized [2Fe-2S]-[ferredoxin]. Its pathway is cofactor biosynthesis; biotin biosynthesis; biotin from 7,8-diaminononanoate: step 2/2. Its function is as follows. Catalyzes the conversion of dethiobiotin (DTB) to biotin by the insertion of a sulfur atom into dethiobiotin via a radical-based mechanism. This chain is Biotin synthase, found in Bacillus mycoides (strain KBAB4) (Bacillus weihenstephanensis).